The sequence spans 343 residues: MKFIDEVKIQISAGDGGNGVASFRREKFIPRGGPDGGDGGHGGSIYALADHNLNTLIDYRFTPVFRAKRGENGRGSDCYGKGAEDIVLRMPVGTIITNDLTGELVADLEHDQQKVLLAKGGRGGLGNLHFKSSTNRAPRQFTHGEAGEQFELRLELRVLADVGLLGLPNAGKSTLIRAVSAARPKVADYPFTTLYPNLGVVRVDAGHSFVMADIPGLIEGAAEGAGLGHRFLKHLGRTRLLLHVIDVAPFDENVDIVHSARALVDELRKFDETLYRKPRWLVFNKVDMLPEDEQQAVCTRLLQAMNWQERWFAISALTGRGCQALIYAIMGHLQQLQSDSEET.

An Obg domain is found at 1–159 (MKFIDEVKIQ…FELRLELRVL (159 aa)). Residues 160–334 (ADVGLLGLPN…LIYAIMGHLQ (175 aa)) enclose the OBG-type G domain. GTP is bound by residues 166-173 (GLPNAGKS), 191-195 (FTTLY), 213-216 (DIPG), 284-287 (NKVD), and 315-317 (SAL). The Mg(2+) site is built by Ser173 and Thr193.

It belongs to the TRAFAC class OBG-HflX-like GTPase superfamily. OBG GTPase family. Monomer. Mg(2+) serves as cofactor.

The protein localises to the cytoplasm. Its function is as follows. An essential GTPase which binds GTP, GDP and possibly (p)ppGpp with moderate affinity, with high nucleotide exchange rates and a fairly low GTP hydrolysis rate. Plays a role in control of the cell cycle, stress response, ribosome biogenesis and in those bacteria that undergo differentiation, in morphogenesis control. The polypeptide is GTPase Obg (Nitrosomonas europaea (strain ATCC 19718 / CIP 103999 / KCTC 2705 / NBRC 14298)).